Reading from the N-terminus, the 374-residue chain is Flavonoid O-methyltransferase-like protein Os11g0303600 (374 aa).

Residues aspartate 242, aspartate 262, methionine 263, and lysine 276 each contribute to the S-adenosyl-L-homocysteine site. Residue histidine 280 is the Proton acceptor of the active site.

It belongs to the class I-like SAM-binding methyltransferase superfamily. Cation-independent O-methyltransferase family. COMT subfamily.

In Oryza sativa subsp. japonica (Rice), this protein is Flavonoid O-methyltransferase-like protein Os11g0303600.